The primary structure comprises 188 residues: Tetratricopeptide repeat protein 36 (188 aa).

TPR repeat units follow at residues 50-83, 85-117, and 122-155; these read SKAL…LPER, SAYN…SGGR, and RQGF…GSPF.

This sequence belongs to the TTC36 family.

This Bos taurus (Bovine) protein is Tetratricopeptide repeat protein 36 (TTC36).